The chain runs to 493 residues: Glutamate--tRNA ligase (493 aa).

Positions 10–20 match the 'HIGH' region motif; it reads PSPTGDPHVGT. The short motif at 251 to 255 is the 'KMSKS' region element; that stretch reads KLSKR. K254 lines the ATP pocket.

Belongs to the class-I aminoacyl-tRNA synthetase family. Glutamate--tRNA ligase type 1 subfamily. Monomer.

It localises to the cytoplasm. It carries out the reaction tRNA(Glu) + L-glutamate + ATP = L-glutamyl-tRNA(Glu) + AMP + diphosphate. Functionally, catalyzes the attachment of glutamate to tRNA(Glu) in a two-step reaction: glutamate is first activated by ATP to form Glu-AMP and then transferred to the acceptor end of tRNA(Glu). The polypeptide is Glutamate--tRNA ligase (Marinomonas sp. (strain MWYL1)).